The sequence spans 127 residues: Glycine cleavage system H protein (127 aa).

The Lipoyl-binding domain maps to 24 to 105 (TALVGITDFA…YNDGWLVKMK (82 aa)). The residue at position 65 (Lys65) is an N6-lipoyllysine.

Belongs to the GcvH family. In terms of assembly, the glycine cleavage system is composed of four proteins: P, T, L and H. (R)-lipoate is required as a cofactor.

The glycine cleavage system catalyzes the degradation of glycine. The H protein shuttles the methylamine group of glycine from the P protein to the T protein. This chain is Glycine cleavage system H protein, found in Pelodictyon phaeoclathratiforme (strain DSM 5477 / BU-1).